A 328-amino-acid polypeptide reads, in one-letter code: Methionyl-tRNA formyltransferase (328 aa).

110-113 (SLLP) serves as a coordination point for (6S)-5,6,7,8-tetrahydrofolate.

It belongs to the Fmt family.

It carries out the reaction L-methionyl-tRNA(fMet) + (6R)-10-formyltetrahydrofolate = N-formyl-L-methionyl-tRNA(fMet) + (6S)-5,6,7,8-tetrahydrofolate + H(+). Attaches a formyl group to the free amino group of methionyl-tRNA(fMet). The formyl group appears to play a dual role in the initiator identity of N-formylmethionyl-tRNA by promoting its recognition by IF2 and preventing the misappropriation of this tRNA by the elongation apparatus. This Prochlorococcus marinus (strain MIT 9515) protein is Methionyl-tRNA formyltransferase.